The chain runs to 31 residues: Putative gene 37 protein (31 aa).

The protein is Putative gene 37 protein (37) of Bacillus subtilis (Bacteriophage SP01).